A 555-amino-acid chain; its full sequence is Vacuolar fusion protein MON1 homolog A (555 aa).

Residues methionine 1 to glutamate 12 are compositionally biased toward basic and acidic residues. Positions methionine 1–isoleucine 90 are disordered. Phosphoserine is present on residues serine 31 and serine 56. Position 61 is a phosphothreonine (threonine 61). Serine 91 is subject to Phosphoserine. The segment at methionine 112–glutamate 149 is disordered. Residues proline 130–alanine 139 are compositionally biased toward basic and acidic residues.

This sequence belongs to the MON1/SAND family. As to quaternary structure, interacts with CCZ1. Found in a complex with RMC1, CCZ1, MON1A and MON1B. The MON1A-CCZ1B complex interacts with RIMOC1. The MON1A-CCZ1B complex interacts with RAB7A and this interaction is enhanced in the presence of RIMOC1.

In terms of biological role, plays an important role in membrane trafficking through the secretory apparatus. Not involved in endocytic trafficking to lysosomes. Acts in concert with CCZ1, as a guanine exchange factor (GEF) for RAB7, promotes the exchange of GDP to GTP, converting it from an inactive GDP-bound form into an active GTP-bound form. This is Vacuolar fusion protein MON1 homolog A (MON1A) from Bos taurus (Bovine).